The following is a 532-amino-acid chain: Berberine bridge enzyme-like 18 (532 aa).

Residues 1-29 (MKFQSFFSSVLIFFTTSTLLLSIPHPVSA) form the signal peptide. Asn30, Asn33, Asn46, Asn59, Asn147, Asn169, and Asn262 each carry an N-linked (GlcNAc...) asparagine glycan. Cys40 and Cys102 are joined by a disulfide. The FAD-binding PCMH-type domain occupies 80-254 (DVPKPVLILT…LSWKIGLINV (175 aa)). A cross-link (6-(S-cysteinyl)-8alpha-(pros-histidyl)-FAD (His-Cys)) is located at residues 117–179 (HDYEGLSYVT…RTLAFPAGVC (63 aa)).

The protein belongs to the oxygen-dependent FAD-linked oxidoreductase family. FAD is required as a cofactor. In terms of processing, the FAD cofactor is bound via a bicovalent 6-S-cysteinyl, 8alpha-N1-histidyl FAD linkage.

The protein resides in the secreted. It localises to the cell wall. The sequence is that of Berberine bridge enzyme-like 18 from Arabidopsis thaliana (Mouse-ear cress).